A 276-amino-acid chain; its full sequence is NADH-cytochrome b5 reductase 2 (276 aa).

Positions E15–N127 constitute an FAD-binding FR-type domain. Residue K17 is modified to N6-acetyllysine. The residue at position 18 (Y18) is a Phosphotyrosine. FAD is bound by residues E107–D137 and L146–L181.

The protein belongs to the flavoprotein pyridine nucleotide cytochrome reductase family. Requires FAD as cofactor.

It carries out the reaction 2 Fe(III)-[cytochrome b5] + NADH = 2 Fe(II)-[cytochrome b5] + NAD(+) + H(+). NADH-cytochrome b5 reductases are involved in desaturation and elongation of fatty acids, cholesterol biosynthesis, drug metabolism, and, in erythrocyte, methemoglobin reduction. Responsible for NADH-dependent lucigenin chemiluminescence in spermatozoa by reducing both lucigenin and 2-[4-iodophenyl]-3-[4-nitrophenyl]-5-[2,4-disulfophenyl]-2H tetrazolium monosodium salt (WST-1). This chain is NADH-cytochrome b5 reductase 2 (Cyb5r2), found in Rattus norvegicus (Rat).